We begin with the raw amino-acid sequence, 527 residues long: Proline--tRNA ligase (527 aa).

This sequence belongs to the class-II aminoacyl-tRNA synthetase family. ProS type 3 subfamily. As to quaternary structure, homodimer.

The protein localises to the cytoplasm. It catalyses the reaction tRNA(Pro) + L-proline + ATP = L-prolyl-tRNA(Pro) + AMP + diphosphate. Catalyzes the attachment of proline to tRNA(Pro) in a two-step reaction: proline is first activated by ATP to form Pro-AMP and then transferred to the acceptor end of tRNA(Pro). This chain is Proline--tRNA ligase, found in Sphingopyxis alaskensis (strain DSM 13593 / LMG 18877 / RB2256) (Sphingomonas alaskensis).